Reading from the N-terminus, the 1152-residue chain is Nardilysin (1152 aa).

The signal sequence occupies residues 1–20 (MLRKVTVAAVCATRRKLCEA). Disordered regions lie at residues 81–108 (LGAD…KSPS) and 133–208 (MEGK…KKTT). Phosphoserine is present on residues S86, S94, and S96. Positions 141–198 (TDDEEEEEVEEEEEDDDEDSGAEIEDDDEEGFDDEDEFDDEHDDDLDTEDNELEELEE) are enriched in acidic residues. H234 contributes to the Zn(2+) binding site. E237 functions as the Proton acceptor in the catalytic mechanism. Zn(2+) contacts are provided by H238 and E315.

It belongs to the peptidase M16 family. Interacts with BACE1 and NRG1. It depends on Zn(2+) as a cofactor.

The protein resides in the mitochondrion. The protein localises to the cell projection. It is found in the dendrite. It catalyses the reaction Hydrolysis of polypeptides, preferably at -Xaa-|-Arg-Lys-, and less commonly at -Arg-|-Arg-Xaa-, in which Xaa is not Arg or Lys.. Its function is as follows. Cleaves peptide substrates on the N-terminus of arginine residues in dibasic pairs. Is a critical activator of BACE1- and ADAM17-mediated pro-neuregulin ectodomain shedding, involved in the positive regulation of axonal maturation and myelination. Required for proper functioning of 2-oxoglutarate dehydrogenase (OGDH). This Pongo abelii (Sumatran orangutan) protein is Nardilysin.